We begin with the raw amino-acid sequence, 475 residues long: D-lactate dehydrogenase (475 aa).

The FAD-binding PCMH-type domain occupies 43–222; the sequence is YGKARPEVLV…TELTLKVIPA (180 aa).

This sequence belongs to the FAD-binding oxidoreductase/transferase type 4 family. Requires FAD as cofactor. The cofactor is Zn(2+).

The enzyme catalyses (R)-lactate + A = pyruvate + AH2. Catalyzes the dehydrogenation of (R)-lactate (D-lactate) to pyruvate. Active in vitro with the artificial electron acceptor 2,6-dichlorophenolindophenol (DCPIP), but not with NAD, NADP, or cytochrome c. Also displays a very low oxidase activity in vitro on D-lactate and L-lactate with O2 as the electron acceptor, but this activity is most likely not physiological. In Anaerostipes hadrus, this protein is D-lactate dehydrogenase.